A 72-amino-acid polypeptide reads, in one-letter code: Threonine dehydratase operon activator protein (72 aa).

Functionally, probable trans-acting positive activator for the tdc operon. This Escherichia coli (strain K12) protein is Threonine dehydratase operon activator protein (tdcR).